Here is a 203-residue protein sequence, read N- to C-terminus: Small ribosomal subunit protein uS4 (203 aa).

Positions 93-153 constitute an S4 RNA-binding domain; the sequence is RRLDNIVYRL…DKSKNLQQVK (61 aa).

The protein belongs to the universal ribosomal protein uS4 family. In terms of assembly, part of the 30S ribosomal subunit. Contacts protein S5. The interaction surface between S4 and S5 is involved in control of translational fidelity.

Functionally, one of the primary rRNA binding proteins, it binds directly to 16S rRNA where it nucleates assembly of the body of the 30S subunit. Its function is as follows. With S5 and S12 plays an important role in translational accuracy. The protein is Small ribosomal subunit protein uS4 of Lactobacillus gasseri (strain ATCC 33323 / DSM 20243 / BCRC 14619 / CIP 102991 / JCM 1131 / KCTC 3163 / NCIMB 11718 / NCTC 13722 / AM63).